The chain runs to 323 residues: tRNA dimethylallyltransferase (323 aa).

12–19 contributes to the ATP binding site; that stretch reads GPTAAGKT. Substrate is bound at residue 14-19; it reads TAAGKT. Interaction with substrate tRNA regions lie at residues 37–40 and 161–165; these read DSAL and QRLMR.

Belongs to the IPP transferase family. As to quaternary structure, monomer. Requires Mg(2+) as cofactor.

It carries out the reaction adenosine(37) in tRNA + dimethylallyl diphosphate = N(6)-dimethylallyladenosine(37) in tRNA + diphosphate. Its function is as follows. Catalyzes the transfer of a dimethylallyl group onto the adenine at position 37 in tRNAs that read codons beginning with uridine, leading to the formation of N6-(dimethylallyl)adenosine (i(6)A). This chain is tRNA dimethylallyltransferase, found in Pseudomonas aeruginosa (strain UCBPP-PA14).